Here is a 319-residue protein sequence, read N- to C-terminus: ATP-dependent 6-phosphofructokinase (319 aa).

G11 serves as a coordination point for ATP. 21–25 (RAVVR) provides a ligand contact to ADP. Residues 72-73 (RC) and 102-105 (GDGS) contribute to the ATP site. Residue D103 coordinates Mg(2+). Position 125 to 127 (125 to 127 (TID)) interacts with substrate. D127 serves as the catalytic Proton acceptor. R154 is a binding site for ADP. Residues R162 and 169–171 (MGR) contribute to the substrate site. Residues 185-187 (GAE), R211, and 213-215 (KKH) each bind ADP. Substrate contacts are provided by residues E222, R243, and 249–252 (HIQR).

It belongs to the phosphofructokinase type A (PFKA) family. ATP-dependent PFK group I subfamily. Prokaryotic clade 'B1' sub-subfamily. As to quaternary structure, homotetramer. Mg(2+) is required as a cofactor.

It is found in the cytoplasm. The enzyme catalyses beta-D-fructose 6-phosphate + ATP = beta-D-fructose 1,6-bisphosphate + ADP + H(+). It participates in carbohydrate degradation; glycolysis; D-glyceraldehyde 3-phosphate and glycerone phosphate from D-glucose: step 3/4. Its activity is regulated as follows. Allosterically activated by ADP and other diphosphonucleosides, and allosterically inhibited by phosphoenolpyruvate. In terms of biological role, catalyzes the phosphorylation of D-fructose 6-phosphate to fructose 1,6-bisphosphate by ATP, the first committing step of glycolysis. In Halalkalibacterium halodurans (strain ATCC BAA-125 / DSM 18197 / FERM 7344 / JCM 9153 / C-125) (Bacillus halodurans), this protein is ATP-dependent 6-phosphofructokinase.